The following is a 546-amino-acid chain: Chaperonin GroEL (546 aa).

ATP is bound by residues 29–32 (TLGP), 86–90 (DGTTT), glycine 413, 476–478 (NAA), and aspartate 492. A disordered region spans residues 521–546 (RPDESGNDAGAGAQGMDPSMMGGGMM).

Belongs to the chaperonin (HSP60) family. In terms of assembly, forms a cylinder of 14 subunits composed of two heptameric rings stacked back-to-back. Interacts with the co-chaperonin GroES.

Its subcellular location is the cytoplasm. The enzyme catalyses ATP + H2O + a folded polypeptide = ADP + phosphate + an unfolded polypeptide.. Functionally, together with its co-chaperonin GroES, plays an essential role in assisting protein folding. The GroEL-GroES system forms a nano-cage that allows encapsulation of the non-native substrate proteins and provides a physical environment optimized to promote and accelerate protein folding. The chain is Chaperonin GroEL from Tetragenococcus halophilus (Pediococcus halophilus).